A 441-amino-acid chain; its full sequence is MAEAKEENREKNEEEESVKLFVGQIPKHMSESQLLTLFQEFAVVDEVNIIKDKITRASRGCCFLLCPSREEADKLVNACHNKKTLPGANSLLQVKYADGELERLEHKLFVGMLPKNVSEAEVQSLFSKYGTIKDLQILRGAQQTSKGCAFLKYETKEQAVSAMESINGKHKMEGSTVPLVVKWADTERERHTRRLQKAQSHIARLGNGDPTNPSLFGALPMGYVPPYNGYGYHQPPGTYGYMLPPIQNQAAFSNMIAQPNQGNNNALQGTSPDSVPPRLARRNFPMPPGNYMGSGYPAMRGHPFPFAYPRGIVSPRPLSSSPGSISPGMSTPLGIGLSSVVQTEGPEGANLFIYNIPREFGDQELAAAFQSFGIVLSAKVFVDKATGVSKCFGFVSYDSQAAAQNAIDMMNGRHLGGKKLKVQLKRDSNNGQPSSNPSLIS.

RRM domains are found at residues valine 18–glycine 99 and histidine 106–threonine 186. Positions glutamine 258 to aspartate 273 are enriched in polar residues. The disordered stretch occupies residues glutamine 258 to arginine 282. The RRM 3 domain occupies alanine 349 to aspartate 427.

In terms of tissue distribution, highly expressed in stems and cauline leaves, and at lower levels in siliques, flowers, roots and rosette leaves.

The protein localises to the cytoplasm. Functionally, RNA-binding protein involved in the regulation of flowering time. Acts as a repressor of the activity of SOC1, a transcriptional activator of flowering time. Binds to the 3'-UTR of SOC1 mRNA in the cytoplasm and participates in SOC1 mRNA decay, mediated by the distal region of the SOC1 3'-UTR. Acts as a positive regulator of salicylic acid (SA)-mediated immunity. May act on SA signaling-related genes at a post-transcriptional level. This chain is RNA-binding protein BRN1, found in Arabidopsis thaliana (Mouse-ear cress).